A 137-amino-acid chain; its full sequence is uncharacterized protein (137 aa).

Residues 4–73 form the HTH merR-type domain; the sequence is MLTVSEVARK…LEEIADILHL (70 aa). Positions 8-27 form a DNA-binding region, H-T-H motif; the sequence is SEVARKLGLNPQTLYFYERI.

This is an uncharacterized protein from Synechocystis sp. (strain ATCC 27184 / PCC 6803 / Kazusa).